We begin with the raw amino-acid sequence, 307 residues long: Small ribosomal subunit biogenesis GTPase RsgA (307 aa).

A disordered region spans residues 1–21 (MPSEHPFSDGISTPNPKETMN). Positions 10–21 (GISTPNPKETMN) are enriched in polar residues. The 158-residue stretch at 85–242 (RQDAWKTKLI…LIDSPGLQEF (158 aa)) folds into the CP-type G domain. GTP contacts are provided by residues 135 to 138 (NKAD) and 184 to 192 (GQSGMGKST). Residues Cys-266, Cys-271, His-273, and Cys-279 each coordinate Zn(2+).

Belongs to the TRAFAC class YlqF/YawG GTPase family. RsgA subfamily. As to quaternary structure, monomer. Associates with 30S ribosomal subunit, binds 16S rRNA. The cofactor is Zn(2+).

It is found in the cytoplasm. One of several proteins that assist in the late maturation steps of the functional core of the 30S ribosomal subunit. Helps release RbfA from mature subunits. May play a role in the assembly of ribosomal proteins into the subunit. Circularly permuted GTPase that catalyzes slow GTP hydrolysis, GTPase activity is stimulated by the 30S ribosomal subunit. In Neisseria gonorrhoeae (strain NCCP11945), this protein is Small ribosomal subunit biogenesis GTPase RsgA.